We begin with the raw amino-acid sequence, 148 residues long: Small ribosomal subunit protein eS19G (148 aa).

This sequence belongs to the eukaryotic ribosomal protein eS19 family.

In terms of biological role, elimination of the ALEP-1 gene from all somatic cells in its fully activate state may represent an alternative way to gene regulation. The polypeptide is Small ribosomal subunit protein eS19G (RPS19G) (Ascaris suum (Pig roundworm)).